A 228-amino-acid polypeptide reads, in one-letter code: Vacuolar-sorting protein snf7 (228 aa).

Coiled-coil stretches lie at residues 25-94 (ILGL…QINA) and 125-226 (EKVD…QAEM).

It belongs to the SNF7 family. A component of the endosomal sorting required for transport complex III (ESCRT-III).

It localises to the cytoplasm. The protein localises to the endosome membrane. Its function is as follows. Required for the sorting and concentration of proteins resulting in the entry of these proteins into the invaginating vesicles of the multivesicular body (MVB). Also required for the proteolytic cleavage of the transcription factor pacc-1 in response to alkaline ambient pH. The polypeptide is Vacuolar-sorting protein snf7 (vsp-3) (Neurospora crassa (strain ATCC 24698 / 74-OR23-1A / CBS 708.71 / DSM 1257 / FGSC 987)).